A 232-amino-acid chain; its full sequence is Aliphatic sulfonates import ATP-binding protein SsuB 2 (232 aa).

The ABC transporter domain maps to 1–216 (MDIRVDRKAF…PRDRRDPLLA (216 aa)). 33-40 (GPSGCGKS) contributes to the ATP binding site.

Belongs to the ABC transporter superfamily. Aliphatic sulfonates importer (TC 3.A.1.17.2) family. As to quaternary structure, the complex is composed of two ATP-binding proteins (SsuB), two transmembrane proteins (SsuC) and a solute-binding protein (SsuA).

It localises to the cell inner membrane. The catalysed reaction is ATP + H2O + aliphatic sulfonate-[sulfonate-binding protein]Side 1 = ADP + phosphate + aliphatic sulfonateSide 2 + [sulfonate-binding protein]Side 1.. Functionally, part of the ABC transporter complex SsuABC involved in aliphatic sulfonates import. Responsible for energy coupling to the transport system. This chain is Aliphatic sulfonates import ATP-binding protein SsuB 2, found in Pseudomonas syringae pv. tomato (strain ATCC BAA-871 / DC3000).